We begin with the raw amino-acid sequence, 254 residues long: L-arabinose 1-dehydrogenase (NAD(P)(+)) (254 aa).

The active-site Proton acceptor is tyrosine 142. 2 residues coordinate NAD(+): tyrosine 142 and lysine 146.

Belongs to the NAD(P)-dependent epimerase/dehydratase family. Homotetramer.

It catalyses the reaction alpha-L-arabinopyanose + NAD(+) = L-arabinono-1,4-lactone + NADH + H(+). The enzyme catalyses alpha-L-arabinopyanose + NADP(+) = L-arabinono-1,4-lactone + NADPH + H(+). It participates in carbohydrate degradation; L-arabinose degradation via L-arabinono-1,4-lactone pathway. Functionally, L-AraDH initiates the degradation of L-arabinose. Catalyzes the NAD(P)(+)-dependent conversion of L-arabinose to L-arabino-gamma-lactone. It is highly specific for L-arabinose as substrate and can use both NADP(+) and NAD(+) as electron acceptor, with a slight preference for NADP(+). The sequence is that of L-arabinose 1-dehydrogenase (NAD(P)(+)) from Haloferax volcanii (strain ATCC 29605 / DSM 3757 / JCM 8879 / NBRC 14742 / NCIMB 2012 / VKM B-1768 / DS2) (Halobacterium volcanii).